We begin with the raw amino-acid sequence, 165 residues long: Short form salivary protein D7R4 (165 aa).

The N-terminal stretch at 1 to 21 is a signal peptide; the sequence is MIRQVITSYFLTVCLLALVQG. Disulfide bonds link C27/C59, C40/C165, and C98/C117. Noradrenaline-binding residues include E28 and R43. E28 serves as a coordination point for serotonin. Serotonin contacts are provided by H56, Y115, D132, and E135. 3 residues coordinate histamine: Y115, D132, and E135. Tryptamine is bound by residues Y115, D132, and E135. Noradrenaline-binding residues include D132 and E135.

It belongs to the PBP/GOBP family. In terms of tissue distribution, female saliva (at protein level). Female salivary gland. Not detected in female carcass without salivary glands. Not detected in male tissues.

The protein resides in the secreted. Functionally, modulates blood feeding of female mosquitoes on vertebrate species by binding and sequestering different mediators involved in the host response. Binds serotonin, noradrenaline, histamine and tryptamine. Inhibits histamine-, serotonin- and partially noradrenaline-induced smooth muscle contraction. Exhibits vasodilating activity. The chain is Short form salivary protein D7R4 from Anopheles gambiae (African malaria mosquito).